The chain runs to 72 residues: Translation initiation factor IF-1 (72 aa).

The S1-like domain occupies 1–72 (MAKEEAIEIE…TKGRITYRYK (72 aa)).

The protein belongs to the IF-1 family. In terms of assembly, component of the 30S ribosomal translation pre-initiation complex which assembles on the 30S ribosome in the order IF-2 and IF-3, IF-1 and N-formylmethionyl-tRNA(fMet); mRNA recruitment can occur at any time during PIC assembly.

It is found in the cytoplasm. One of the essential components for the initiation of protein synthesis. Stabilizes the binding of IF-2 and IF-3 on the 30S subunit to which N-formylmethionyl-tRNA(fMet) subsequently binds. Helps modulate mRNA selection, yielding the 30S pre-initiation complex (PIC). Upon addition of the 50S ribosomal subunit IF-1, IF-2 and IF-3 are released leaving the mature 70S translation initiation complex. The chain is Translation initiation factor IF-1 from Chlorobium phaeobacteroides (strain DSM 266 / SMG 266 / 2430).